The following is a 612-amino-acid chain: ETS-related transcription factor Elf-1 (612 aa).

A phosphoserine mark is found at serine 110, serine 163, serine 167, and serine 168. Positions 156–169 (VQETNADSPGASSP) are enriched in polar residues. The segment at 156–199 (VQETNADSPGASSPEQRKRKKGRKTKPPRPDSPTTTPNISVKKK) is disordered. Residues 172–182 (RKRKKGRKTKP) show a composition bias toward basic residues. A Phosphoserine modification is found at serine 187. At threonine 190 the chain carries Phosphothreonine. The segment at residues 208 to 290 (IYLWEFLLAL…EGQRLVYQFK (83 aa)) is a DNA-binding region (ETS). A disordered region spans residues 300-361 (DDEDPSSSIE…AANPKDPVEV (62 aa)). A compositionally biased stretch (low complexity) spans 305-322 (SSSIESSDQSLSSTTASS). Residues 323-335 (RNQANRSRVSSSP) show a composition bias toward polar residues. Residue serine 431 is modified to Phosphoserine. The span at 562–577 (EVEKKAEDDLNEDAEK) shows a compositional bias: basic and acidic residues. A disordered region spans residues 562–586 (EVEKKAEDDLNEDAEKSAQQPQPYV).

Belongs to the ETS family. As to quaternary structure, binds to the underphosphorylated form of RB. May interact with other transcription factors in order to regulate specific genes. Interacts with RUNX1. Interacts with SP1; the interaction is inhibited by glycosylation of SP1. Predominantly found in hematopoietic cells. Detected in other cell types such as fibroblasts.

It localises to the nucleus. Transcription factor that activates the LYN and BLK promoters. In Mus musculus (Mouse), this protein is ETS-related transcription factor Elf-1 (Elf1).